Consider the following 424-residue polypeptide: UPF0597 protein Sputcn32_1209 (424 aa).

Belongs to the UPF0597 family.

The chain is UPF0597 protein Sputcn32_1209 from Shewanella putrefaciens (strain CN-32 / ATCC BAA-453).